The primary structure comprises 145 residues: MKGLLQRVRGARVEVAGDIVGAVDQGLLVLVAVEPEDTRASADKLLHKLLNYRVFSDAEGKMNLSLADVQGGLLLVSQFTLAADTKSGLRPSFSTAAPPALGEELFDYLVVKAQQLHGKVASGRFGADMQVHLVNDGPVTFLLQT.

Positions 137–138 (GP) match the Gly-cisPro motif, important for rejection of L-amino acids motif.

It belongs to the DTD family. In terms of assembly, homodimer.

The protein resides in the cytoplasm. It catalyses the reaction glycyl-tRNA(Ala) + H2O = tRNA(Ala) + glycine + H(+). It carries out the reaction a D-aminoacyl-tRNA + H2O = a tRNA + a D-alpha-amino acid + H(+). Functionally, an aminoacyl-tRNA editing enzyme that deacylates mischarged D-aminoacyl-tRNAs. Also deacylates mischarged glycyl-tRNA(Ala), protecting cells against glycine mischarging by AlaRS. Acts via tRNA-based rather than protein-based catalysis; rejects L-amino acids rather than detecting D-amino acids in the active site. By recycling D-aminoacyl-tRNA to D-amino acids and free tRNA molecules, this enzyme counteracts the toxicity associated with the formation of D-aminoacyl-tRNA entities in vivo and helps enforce protein L-homochirality. The chain is D-aminoacyl-tRNA deacylase from Pseudomonas fluorescens (strain ATCC BAA-477 / NRRL B-23932 / Pf-5).